Reading from the N-terminus, the 259-residue chain is Undecaprenyl-diphosphatase 4 (259 aa).

Helical transmembrane passes span 1-21 (MNWLEAFILGIIQGLTEFLPI), 39-59 (AGLFLDTMLHIGTLLAVFIYY), 71-91 (FSKLMLLLIVGTIPAVVIGLL), 99-119 (ISKTGITIGWEFLVTGFFLYM), 133-153 (ITYKDAFIIGSFQAAAIFPAI), 173-193 (AAYFSFLLSTPAIVGAIILQF), 208-228 (SLIVGTLSAAFFGYIAVSWMI), and 239-259 (FAYYVWGLGIIIITLQYTHVF).

This sequence belongs to the UppP family.

Its subcellular location is the cell membrane. It carries out the reaction di-trans,octa-cis-undecaprenyl diphosphate + H2O = di-trans,octa-cis-undecaprenyl phosphate + phosphate + H(+). Functionally, catalyzes the dephosphorylation of undecaprenyl diphosphate (UPP). Confers resistance to bacitracin. This is Undecaprenyl-diphosphatase 4 from Bacillus thuringiensis (strain Al Hakam).